A 127-amino-acid chain; its full sequence is Small ribosomal subunit protein uS11 (127 aa).

The protein belongs to the universal ribosomal protein uS11 family. As to quaternary structure, part of the 30S ribosomal subunit. Interacts with proteins S7 and S18. Binds to IF-3.

Located on the platform of the 30S subunit, it bridges several disparate RNA helices of the 16S rRNA. Forms part of the Shine-Dalgarno cleft in the 70S ribosome. The polypeptide is Small ribosomal subunit protein uS11 (Flavobacterium psychrophilum (strain ATCC 49511 / DSM 21280 / CIP 103535 / JIP02/86)).